Here is a 388-residue protein sequence, read N- to C-terminus: Chorismate synthase (388 aa).

2 residues coordinate NADP(+): Arg-39 and Arg-45. FMN contacts are provided by residues 130 to 132 (RSS), 251 to 252 (NA), Gly-296, 311 to 315 (KPIPT), and Arg-337.

Belongs to the chorismate synthase family. In terms of assembly, homotetramer. FMNH2 is required as a cofactor.

It carries out the reaction 5-O-(1-carboxyvinyl)-3-phosphoshikimate = chorismate + phosphate. It functions in the pathway metabolic intermediate biosynthesis; chorismate biosynthesis; chorismate from D-erythrose 4-phosphate and phosphoenolpyruvate: step 7/7. Functionally, catalyzes the anti-1,4-elimination of the C-3 phosphate and the C-6 proR hydrogen from 5-enolpyruvylshikimate-3-phosphate (EPSP) to yield chorismate, which is the branch point compound that serves as the starting substrate for the three terminal pathways of aromatic amino acid biosynthesis. This reaction introduces a second double bond into the aromatic ring system. The chain is Chorismate synthase from Streptococcus pyogenes serotype M49 (strain NZ131).